A 261-amino-acid chain; its full sequence is Mannose-specific lectin 2 (261 aa).

Residues 1-23 (MAKLLLFLLPAILGLLIPRSAVA) form the signal peptide. 2 Bulb-type lectin domains span residues 26–131 (TNYL…PWVP) and 145–252 (DNLL…SKRS). Residues 51 to 55 (QNDCN), tyrosine 59, tryptophan 63, glutamine 64, 170 to 174 (QGDCN), tyrosine 178, and 182 to 185 (YGWQ) each bind beta-D-mannose. Residues 51-59 (QNDCNLVLY) carry the Carbohydrate-binding motif 1 motif. Cystine bridges form between cysteine 54–cysteine 74 and cysteine 173–cysteine 195. The short motif at 170–178 (QGDCNLVLY) is the Carbohydrate-binding motif 2 element.

In terms of assembly, forms heterotetramer of 2 chains 1 and 2 chains 2 arranged as a dimer of chain 1 and chain 2 heterodimers.

Its function is as follows. Mannose-specific lectin. Shows agglutinating activity towards erythrocytes from rabbit. This Colocasia esculenta (Wild taro) protein is Mannose-specific lectin 2.